Consider the following 104-residue polypeptide: Large ribosomal subunit protein uL24 (104 aa).

The protein belongs to the universal ribosomal protein uL24 family. Part of the 50S ribosomal subunit.

One of two assembly initiator proteins, it binds directly to the 5'-end of the 23S rRNA, where it nucleates assembly of the 50S subunit. In terms of biological role, one of the proteins that surrounds the polypeptide exit tunnel on the outside of the subunit. The sequence is that of Large ribosomal subunit protein uL24 from Corynebacterium kroppenstedtii (strain DSM 44385 / JCM 11950 / CIP 105744 / CCUG 35717).